Consider the following 896-residue polypeptide: Desmocollin-3 (896 aa).

The signal sequence occupies residues 1–31; sequence MVVPEFRSPQCRALCTKLLLTLWVFSFVGEA. Residues 32–135 constitute a propeptide that is removed on maturation; it reads CKKVTFHVPS…KETVLRRSKR (104 aa). Cadherin domains are found at residues 136–243, 244–355, 356–472, 473–580, and 581–691; these read RWAP…YPLF, TEAI…APTF, RQNT…GPEC, KPPE…EIIQ, and DYIV…TLGK. The Extracellular portion of the chain corresponds to 136 to 695; it reads RWAPIPCSMQ…GITLGKWAIL (560 aa). N-linked (GlcNAc...) asparagine glycosylation occurs at Asn-166. Residues Asn-392 and Asn-547 are each glycosylated (N-linked (GlcNAc...) asparagine). A glycan (N-linked (GlcNAc...) (high mannose) asparagine) is linked at Asn-630. Residues 696–716 traverse the membrane as a helical segment; sequence AILLGIALLFSVLLTLVCGVV. The Cytoplasmic segment spans residues 717–896; the sequence is TARKGKHFPE…LTLAETCTKR (180 aa).

May form homodimers. Interacts with DSG1; there is evidence to suggest that the interaction promotes cell-cell adhesion of keratinocytes. Expressed in the basal layers of epidermal stratified epithelia from birth (at protein level).

The protein localises to the cell membrane. The protein resides in the cell junction. It localises to the desmosome. Its subcellular location is the cytoplasm. Its function is as follows. A component of desmosome cell-cell junctions which are required for positive regulation of cellular adhesion. Required for cell-cell adhesion in the epidermis, as a result required for the maintenance of the dermal cohesion and the dermal barrier function. Required for cell-cell adhesion of epithelial cell layers surrounding the telogen hair club, as a result plays an important role in telogen hair shaft anchorage. Essential for successful completion of embryo compaction and development beyond the 8-cell stage. In Mus musculus (Mouse), this protein is Desmocollin-3 (Dsc3).